The primary structure comprises 282 residues: D-alanine aminotransferase (282 aa).

Residue Y32 participates in substrate binding. R51 serves as a coordination point for pyridoxal 5'-phosphate. 2 residues coordinate substrate: R99 and H101. K146 acts as the Proton acceptor in catalysis. An N6-(pyridoxal phosphate)lysine modification is found at K146. E178 contacts pyridoxal 5'-phosphate.

Belongs to the class-IV pyridoxal-phosphate-dependent aminotransferase family. Homodimer. It depends on pyridoxal 5'-phosphate as a cofactor.

It catalyses the reaction D-alanine + 2-oxoglutarate = D-glutamate + pyruvate. Acts on the D-isomers of alanine, leucine, aspartate, glutamate, aminobutyrate, norvaline and asparagine. The enzyme transfers an amino group from a substrate D-amino acid to the pyridoxal phosphate cofactor to form pyridoxamine and an alpha-keto acid in the first half-reaction. The second half-reaction is the reverse of the first, transferring the amino group from the pyridoxamine to a second alpha-keto acid to form the product D-amino acid via a ping-pong mechanism. This is an important process in the formation of D-alanine and D-glutamate, which are essential bacterial cell wall components. The protein is D-alanine aminotransferase (dat) of Staphylococcus aureus (strain MW2).